Reading from the N-terminus, the 329-residue chain is DNA-directed RNA polymerase subunit alpha (329 aa).

The segment at 1–234 (MQSAVNEFLT…QQLAVFVDLE (234 aa)) is alpha N-terminal domain (alpha-NTD). Residues 248–329 (IDPVLLRPVD…WPPASLKNND (82 aa)) form an alpha C-terminal domain (alpha-CTD) region.

It belongs to the RNA polymerase alpha chain family. Homodimer. The RNAP catalytic core consists of 2 alpha, 1 beta, 1 beta' and 1 omega subunit. When a sigma factor is associated with the core the holoenzyme is formed, which can initiate transcription.

It carries out the reaction RNA(n) + a ribonucleoside 5'-triphosphate = RNA(n+1) + diphosphate. DNA-dependent RNA polymerase catalyzes the transcription of DNA into RNA using the four ribonucleoside triphosphates as substrates. The sequence is that of DNA-directed RNA polymerase subunit alpha from Saccharophagus degradans (strain 2-40 / ATCC 43961 / DSM 17024).